Reading from the N-terminus, the 654-residue chain is Mitochondrial-processing peptidase subunit alpha-1 (654 aa).

The tract at residues 73-94 is disordered; sequence SSSSYKGNNNNNNKLSYTTSSN. A coiled-coil region spans residues 381 to 446; that stretch reads HKNHLKSQLQ…EQLELQQVKE (66 aa).

This sequence belongs to the peptidase M16 family. Heterodimer of alpha and beta subunits, forming the mitochondrial processing protease (MPP) in which subunit alpha is involved in substrate recognition and binding and subunit beta is the catalytic subunit.

Its subcellular location is the mitochondrion matrix. Functionally, substrate recognition and binding subunit of the essential mitochondrial processing protease (MPP), which cleaves the mitochondrial sequence off newly imported precursors proteins. In Dictyostelium discoideum (Social amoeba), this protein is Mitochondrial-processing peptidase subunit alpha-1 (mppA1).